Consider the following 912-residue polypeptide: Protein translocase subunit SecA (912 aa).

Residues Q87, 105–109, and D508 contribute to the ATP site; that span reads GEGKT. A disordered region spans residues 855–912; the sequence is QHQDAGGYGADEEVEQMQGGNAPVPVSQVTRDEPKVGRNDPCPCGSGKKYKHCHGQLS. The Zn(2+) site is built by C896, C898, C907, and H908. The segment covering 902–912 has biased composition (basic residues); the sequence is KKYKHCHGQLS.

Belongs to the SecA family. In terms of assembly, monomer and homodimer. Part of the essential Sec protein translocation apparatus which comprises SecA, SecYEG and auxiliary proteins SecDF-YajC and YidC. Zn(2+) serves as cofactor.

It localises to the cell inner membrane. The protein resides in the cytoplasm. The catalysed reaction is ATP + H2O + cellular proteinSide 1 = ADP + phosphate + cellular proteinSide 2.. In terms of biological role, part of the Sec protein translocase complex. Interacts with the SecYEG preprotein conducting channel. Has a central role in coupling the hydrolysis of ATP to the transfer of proteins into and across the cell membrane, serving both as a receptor for the preprotein-SecB complex and as an ATP-driven molecular motor driving the stepwise translocation of polypeptide chains across the membrane. This is Protein translocase subunit SecA from Xanthomonas campestris pv. campestris (strain 8004).